Reading from the N-terminus, the 245-residue chain is tRNA1(Val) (adenine(37)-N6)-methyltransferase (245 aa).

It belongs to the methyltransferase superfamily. tRNA (adenine-N(6)-)-methyltransferase family.

It is found in the cytoplasm. The catalysed reaction is adenosine(37) in tRNA1(Val) + S-adenosyl-L-methionine = N(6)-methyladenosine(37) in tRNA1(Val) + S-adenosyl-L-homocysteine + H(+). Functionally, specifically methylates the adenine in position 37 of tRNA(1)(Val) (anticodon cmo5UAC). This Cronobacter sakazakii (strain ATCC BAA-894) (Enterobacter sakazakii) protein is tRNA1(Val) (adenine(37)-N6)-methyltransferase.